A 231-amino-acid chain; its full sequence is Urease subunit gamma/beta (231 aa).

The segment at 1–101 (MLLTPTELER…LVTVHQPIRP (101 aa)) is urease gamma. Positions 102–231 (GQLPLAVMPT…RARAQFFKGA (130 aa)) are urease beta.

The protein in the N-terminal section; belongs to the urease gamma subunit family. This sequence in the C-terminal section; belongs to the urease beta subunit family. Heterohexamer of 3 UreC (alpha) and 3 UreAB (gamma/beta) subunits.

It is found in the cytoplasm. It catalyses the reaction urea + 2 H2O + H(+) = hydrogencarbonate + 2 NH4(+). The protein operates within nitrogen metabolism; urea degradation; CO(2) and NH(3) from urea (urease route): step 1/1. This chain is Urease subunit gamma/beta, found in Pseudomonas syringae pv. syringae (strain B728a).